Consider the following 533-residue polypeptide: Peptide chain release factor 3 (533 aa).

The 276-residue stretch at 9–284 (ARRRTFAIIS…ALCQLSPPPL (276 aa)) folds into the tr-type G domain. GTP contacts are provided by residues 18-25 (SHPDAGKT), 95-99 (DTPGH), and 149-152 (NKLD).

It belongs to the TRAFAC class translation factor GTPase superfamily. Classic translation factor GTPase family. PrfC subfamily.

The protein localises to the cytoplasm. Functionally, increases the formation of ribosomal termination complexes and stimulates activities of RF-1 and RF-2. It binds guanine nucleotides and has strong preference for UGA stop codons. It may interact directly with the ribosome. The stimulation of RF-1 and RF-2 is significantly reduced by GTP and GDP, but not by GMP. This chain is Peptide chain release factor 3, found in Cupriavidus pinatubonensis (strain JMP 134 / LMG 1197) (Cupriavidus necator (strain JMP 134)).